Reading from the N-terminus, the 212-residue chain is MEDRFSAITNLHGDHKQAIFGVYVGHGGVKAAEFAAKNLDKNIVEEVVDATFLKEEGFKGGSSCVTALVSEGSLVVSNAGDCRAVMSVGEMMNGKELKPREDMLIRFTLWRIQGSLVVPRGIGDAQLKKWVIAEPETKISRVEHDHEFLILASHGLWDKVSNQEAVDIARPFCLRTEKPLLLAACKKLVDLSASRGSFDDISVMLIPLRQFV.

Positions Met-1 to Leu-208 constitute a PPM-type phosphatase domain. Residue Asp-199 coordinates Mn(2+).

Belongs to the PP2C family. Mg(2+) serves as cofactor. The cofactor is Mn(2+).

The enzyme catalyses O-phospho-L-seryl-[protein] + H2O = L-seryl-[protein] + phosphate. It carries out the reaction O-phospho-L-threonyl-[protein] + H2O = L-threonyl-[protein] + phosphate. The chain is Putative protein phosphatase 2C 53 from Arabidopsis thaliana (Mouse-ear cress).